The sequence spans 67 residues: Large ribosomal subunit protein bL31 (67 aa).

This sequence belongs to the bacterial ribosomal protein bL31 family. Type A subfamily. As to quaternary structure, part of the 50S ribosomal subunit.

Its function is as follows. Binds the 23S rRNA. The protein is Large ribosomal subunit protein bL31 of Leptospira borgpetersenii serovar Hardjo-bovis (strain JB197).